The primary structure comprises 347 residues: DNA damage tolerance protein RHC31 (347 aa).

Phosphoserine is present on serine 9. A Glycyl lysine isopeptide (Lys-Gly) (interchain with G-Cter in SUMO) cross-link involves residue lysine 35.

In terms of biological role, could be involved in a ubiquitin-related process important for DNA damage tolerance. This Saccharomyces cerevisiae (strain ATCC 204508 / S288c) (Baker's yeast) protein is DNA damage tolerance protein RHC31 (AOS1).